The chain runs to 510 residues: NAD(P)H-quinone oxidoreductase subunit 2, chloroplastic (510 aa).

13 helical membrane-spanning segments follow: residues 28–48, 57–77, 99–119, 124–144, 149–169, 183–203, 227–247, 295–315, 323–343, 354–374, 395–415, 418–438, and 484–504; these read DGSFIFPECILIFGLILLLII, IPWLYFISSTSLVMSITTLLF, IFQFLILLCSTLCIPLSVEYI, MALTEFLLFVLTATLGGMFLC, LITIFVAPECFSLCSYLLSGY, YLLMGGTSSSILVHGFSWLYG, PGISIALIFITVGIGFKLSPA, WHLLLEILAILSMILGNLIAI, MLAYSSIGQIGYVIIGIIVGD, YMLFYISMNLGTFACIVLFGL, ALSLALCLLSLGGLPPLAGFF, LYLFWCGWQAGLYLLVLIGLL, and MIVCVIASTIPGISMNPIIAI.

It belongs to the complex I subunit 2 family. NDH is composed of at least 16 different subunits, 5 of which are encoded in the nucleus.

The protein resides in the plastid. The protein localises to the chloroplast thylakoid membrane. The enzyme catalyses a plastoquinone + NADH + (n+1) H(+)(in) = a plastoquinol + NAD(+) + n H(+)(out). It catalyses the reaction a plastoquinone + NADPH + (n+1) H(+)(in) = a plastoquinol + NADP(+) + n H(+)(out). Functionally, NDH shuttles electrons from NAD(P)H:plastoquinone, via FMN and iron-sulfur (Fe-S) centers, to quinones in the photosynthetic chain and possibly in a chloroplast respiratory chain. The immediate electron acceptor for the enzyme in this species is believed to be plastoquinone. Couples the redox reaction to proton translocation, and thus conserves the redox energy in a proton gradient. The protein is NAD(P)H-quinone oxidoreductase subunit 2, chloroplastic of Silene latifolia (White campion).